Reading from the N-terminus, the 213-residue chain is Putative nascent polypeptide-associated complex subunit alpha-like protein (213 aa).

Positions 1 to 46 are disordered; that stretch reads MPGEATETVPAIEQQLLQPQAETGSGTESDSDESVPELEEQDSTQV. Positions 15–28 are enriched in polar residues; the sequence is QLLQPQAETGSGTE. Acidic residues predominate over residues 29-42; the sequence is SDSDESVPELEEQD. Phosphoserine occurs at positions 43 and 131. The NAC-A/B domain maps to 69–134; that stretch reads RRSEKKARKA…AKIEDLSQEA (66 aa). At Lys141 the chain carries N6-acetyllysine; alternate. Lys141 participates in a covalent cross-link: Glycyl lysine isopeptide (Lys-Gly) (interchain with G-Cter in SUMO2); alternate. Position 160 is a phosphothreonine (Thr160). 3 positions are modified to phosphoserine: Ser165, Ser185, and Ser201. A UBA domain is found at 175 to 211; the sequence is VEIKDIELVLSQANVWGAKAVRALKNSNDIVNAIMEL. Thr212 carries the post-translational modification Phosphothreonine.

The protein belongs to the NAC-alpha family.

The chain is Putative nascent polypeptide-associated complex subunit alpha-like protein from Homo sapiens (Human).